Here is a 188-residue protein sequence, read N- to C-terminus: Transcription factor E (188 aa).

Positions 9–98 (DLEVLRDVTL…SWRLNLREVL (90 aa)) constitute an HTH TFE/IIEalpha-type domain.

Belongs to the TFE family. Monomer. Interaction with RNA polymerase subunits RpoF and RpoE is necessary for Tfe stimulatory transcription activity. Able to interact with Tbp and RNA polymerase in the absence of DNA promoter. Interacts both with the preinitiation and elongation complexes.

Its function is as follows. Transcription factor that plays a role in the activation of archaeal genes transcribed by RNA polymerase. Facilitates transcription initiation by enhancing TATA-box recognition by TATA-box-binding protein (Tbp), and transcription factor B (Tfb) and RNA polymerase recruitment. Not absolutely required for transcription in vitro, but particularly important in cases where Tbp or Tfb function is not optimal. It dynamically alters the nucleic acid-binding properties of RNA polymerases by stabilizing the initiation complex and destabilizing elongation complexes. Seems to translocate with the RNA polymerase following initiation and acts by binding to the non template strand of the transcription bubble in elongation complexes. The sequence is that of Transcription factor E from Methanopyrus kandleri (strain AV19 / DSM 6324 / JCM 9639 / NBRC 100938).